Reading from the N-terminus, the 435-residue chain is Trigger factor (435 aa).

Positions 161–246 (GKRVSIDFVG…VNKVEARELP (86 aa)) constitute a PPIase FKBP-type domain.

The protein belongs to the FKBP-type PPIase family. Tig subfamily.

It is found in the cytoplasm. The enzyme catalyses [protein]-peptidylproline (omega=180) = [protein]-peptidylproline (omega=0). In terms of biological role, involved in protein export. Acts as a chaperone by maintaining the newly synthesized protein in an open conformation. Functions as a peptidyl-prolyl cis-trans isomerase. The protein is Trigger factor of Vibrio campbellii (strain ATCC BAA-1116).